Consider the following 1241-residue polypeptide: uncharacterized protein (1241 aa).

Residues 21-49 (ILNDNVREINIAKKEIKQLREYVGILQQN) adopt a coiled-coil conformation. A run of 3 helical transmembrane segments spans residues 261–281 (VNAI…FVLG), 918–938 (AVVG…GLVA), and 947–967 (GHIV…VIGG). Residues 1005–1028 (THIGKEDSNNGVSTSTNKRSIGKA) are disordered. Polar residues predominate over residues 1013-1028 (NNGVSTSTNKRSIGKA).

The protein localises to the host membrane. This is an uncharacterized protein from Diadromus pulchellus (Parasitic wasp).